Reading from the N-terminus, the 430-residue chain is SH3 domain-containing protein PJ696.02 (430 aa).

A disordered region spans residues 237–372; sequence EPEDIWGPSS…KPKFKQDSLG (136 aa). The span at 263-277 shows a compositional bias: basic and acidic residues; the sequence is RRGDSYRSNRSRAHD. S285 is modified (phosphoserine). The span at 304 to 313 shows a compositional bias: basic and acidic residues; sequence SKMDNRRSKY. Residue T316 is modified to Phosphothreonine. Phosphoserine is present on residues S318 and S324. A Phosphotyrosine modification is found at Y325. S326, S354, and S406 each carry phosphoserine. The span at 333–358 shows a compositional bias: low complexity; that stretch reads VYSSDVSTESSSQFSSRSSEYSKPSR. Positions 371-430 constitute an SH3 domain; the sequence is LGPNQARAMYSFAGEQPGDLSFQKGDIIDIVERSGSHDDWWTGRIGYREGIFPANYVKLS.

Belongs to the SH3YL1 family.

The chain is SH3 domain-containing protein PJ696.02 from Schizosaccharomyces pombe (strain 972 / ATCC 24843) (Fission yeast).